Consider the following 38-residue polypeptide: Photosystem I reaction center subunit IX (38 aa).

A helical membrane pass occupies residues 4 to 24 (FLTTAPVVAAIWFTLTAGILI).

Belongs to the PsaJ family.

The protein resides in the cellular thylakoid membrane. In terms of biological role, may help in the organization of the PsaE and PsaF subunits. This Parasynechococcus marenigrum (strain WH8102) protein is Photosystem I reaction center subunit IX.